The sequence spans 384 residues: MIWQEKIDAALDARRVADALRRRYPVAQGAGRWLVADDCQYLNFSSNDYLGLSHHPQIIRAWQQGADQFGVGSGGSGHVSGYSVAHQVLEEELAEWLGYSRALLFISGFAANQAVIAAMMAKEDRIVADRLSHASLLEAASLSPSPLRRFAHNDVTHLARLLASPCPGQQLVVTEGVFSMDGDSAPLEEIQQVTQQHDGWLMVDDAHGTGVIGEQGRGSCWLQKVKPELLVVTFGKGFGVSGAAVLCSNTVADYLLQFARHLIYSTSMPPAQAQALRASLAVIRSDEGDARREKLAALITRFRAGVQDLPFTLADSWSAIQPLIVGDNSRALQLAEKLRQQGCWVTAIRPPTVPAGTARLRLTLTAAHEMQDIDRLLEVLHGNG.

A substrate-binding site is contributed by Arg-21. Residue 108–109 participates in pyridoxal 5'-phosphate binding; it reads GF. His-133 contacts substrate. 3 residues coordinate pyridoxal 5'-phosphate: Ser-179, His-207, and Thr-233. Lys-236 is subject to N6-(pyridoxal phosphate)lysine. Residue Thr-352 coordinates substrate.

The protein belongs to the class-II pyridoxal-phosphate-dependent aminotransferase family. BioF subfamily. As to quaternary structure, homodimer. It depends on pyridoxal 5'-phosphate as a cofactor.

The catalysed reaction is 6-carboxyhexanoyl-[ACP] + L-alanine + H(+) = (8S)-8-amino-7-oxononanoate + holo-[ACP] + CO2. It functions in the pathway cofactor biosynthesis; biotin biosynthesis. Catalyzes the decarboxylative condensation of pimeloyl-[acyl-carrier protein] and L-alanine to produce 8-amino-7-oxononanoate (AON), [acyl-carrier protein], and carbon dioxide. The sequence is that of 8-amino-7-oxononanoate synthase from Escherichia coli O6:H1 (strain CFT073 / ATCC 700928 / UPEC).